Here is a 395-residue protein sequence, read N- to C-terminus: Elongation factor Tu (395 aa).

Positions 10-204 (KPHLNIGTIG…AVDTWIELPE (195 aa)) constitute a tr-type G domain. The segment at 19 to 26 (GHVDHGKT) is G1. 19 to 26 (GHVDHGKT) is a GTP binding site. Residue T26 coordinates Mg(2+). The interval 60-64 (GITIN) is G2. A G3 region spans residues 81-84 (DCPG). Residues 81-85 (DCPGH) and 136-139 (NKVD) each bind GTP. The G4 stretch occupies residues 136–139 (NKVD). A G5 region spans residues 174–176 (SAL).

It belongs to the TRAFAC class translation factor GTPase superfamily. Classic translation factor GTPase family. EF-Tu/EF-1A subfamily. As to quaternary structure, monomer.

Its subcellular location is the cytoplasm. It carries out the reaction GTP + H2O = GDP + phosphate + H(+). Its function is as follows. GTP hydrolase that promotes the GTP-dependent binding of aminoacyl-tRNA to the A-site of ribosomes during protein biosynthesis. The polypeptide is Elongation factor Tu (Christiangramia forsetii (strain DSM 17595 / CGMCC 1.15422 / KT0803) (Gramella forsetii)).